A 354-amino-acid polypeptide reads, in one-letter code: Protein CbrA (354 aa).

The protein belongs to the CbrA family.

The protein is Protein CbrA (cbrA) of Escherichia coli (strain K12).